The primary structure comprises 883 residues: Serine/threonine-protein phosphatase BSL1 homolog (883 aa).

Kelch repeat units lie at residues Ala-64–Thr-113, Met-221–Gly-271, Arg-273–Ala-323, and Gln-341–His-387. Disordered stretches follow at residues Glu-381–Lys-402, Ser-430–Pro-466, and Asn-499–Pro-525. The segment covering Arg-385–Ser-399 has biased composition (polar residues). 4 residues coordinate Mn(2+): Asp-586, His-588, Asp-620, and Asn-652. Catalysis depends on His-653, which acts as the Proton donor. Mn(2+)-binding residues include His-705 and His-784. Residues Gln-861–Ile-883 form a disordered region. The span at Gln-872–Ile-883 shows a compositional bias: polar residues.

This sequence belongs to the PPP phosphatase family. BSU subfamily. In terms of assembly, interacts with the phosphorylated form of BSK3. The cofactor is Mn(2+).

The protein localises to the nucleus. It catalyses the reaction O-phospho-L-seryl-[protein] + H2O = L-seryl-[protein] + phosphate. The enzyme catalyses O-phospho-L-threonyl-[protein] + H2O = L-threonyl-[protein] + phosphate. In Oryza sativa subsp. japonica (Rice), this protein is Serine/threonine-protein phosphatase BSL1 homolog (BSL1).